A 68-amino-acid chain; its full sequence is DNA gyrase inhibitor YacG (68 aa).

Zn(2+) is bound by residues C10, C13, C29, and C33. Positions 45-68 are disordered; that stretch reads EKRIPSDTELSDSDEWSEEDPLKH. Acidic residues predominate over residues 53–68; that stretch reads ELSDSDEWSEEDPLKH.

It belongs to the DNA gyrase inhibitor YacG family. Interacts with GyrB. Zn(2+) is required as a cofactor.

Inhibits all the catalytic activities of DNA gyrase by preventing its interaction with DNA. Acts by binding directly to the C-terminal domain of GyrB, which probably disrupts DNA binding by the gyrase. This chain is DNA gyrase inhibitor YacG, found in Yersinia pseudotuberculosis serotype O:1b (strain IP 31758).